A 402-amino-acid chain; its full sequence is Pyridinium-3,5-bisthiocarboxylic acid mononucleotide nickel insertion protein (402 aa).

It belongs to the LarC family.

The enzyme catalyses Ni(II)-pyridinium-3,5-bisthiocarboxylate mononucleotide = pyridinium-3,5-bisthiocarboxylate mononucleotide + Ni(2+). Involved in the biosynthesis of a nickel-pincer cofactor ((SCS)Ni(II) pincer complex). Binds Ni(2+), and functions in nickel delivery to pyridinium-3,5-bisthiocarboxylic acid mononucleotide (P2TMN), to form the mature cofactor. Is thus probably required for the activation of nickel-pincer cofactor-dependent enzymes. This chain is Pyridinium-3,5-bisthiocarboxylic acid mononucleotide nickel insertion protein, found in Desulfitobacterium hafniense (strain Y51).